A 141-amino-acid chain; its full sequence is Putative pre-16S rRNA nuclease (141 aa).

Belongs to the YqgF nuclease family.

It is found in the cytoplasm. Could be a nuclease involved in processing of the 5'-end of pre-16S rRNA. This Desulforudis audaxviator (strain MP104C) protein is Putative pre-16S rRNA nuclease.